The chain runs to 375 residues: Protein RIC-3 (375 aa).

A signal peptide spans 1–29 (MALSAVQKVVLFSCLVLCVSLLLPRAYIA). Over 30 to 90 (RGKPAAQEGN…GGGGGTRPSL (61 aa)) the chain is Lumenal. The segment covering 38–47 (GNTGLFQSSG) has biased composition (polar residues). The interval 38 to 63 (GNTGLFQSSGHHPKPTDGRPGGAHFP) is disordered. The chain crosses the membrane as a helical span at residues 91-111 (VGQIIPIYGFGILLYILYILF). Over 112-375 (KLSSKGKSTK…RKRNTKGIEY (264 aa)) the chain is Cytoplasmic. A coiled-coil region spans residues 135–165 (KRKITDYELSQLQDKLKETEEAMEKIISRLG). Residues 251 to 375 (SAEQVAEQMG…RKRNTKGIEY (125 aa)) are disordered. Residues 286-296 (GDQQAQGTISA) show a composition bias toward polar residues. Acidic residues predominate over residues 305–319 (EDIEEDEDEDEDPEV). Residues 365–375 (LRKRNTKGIEY) are compositionally biased toward basic residues.

It belongs to the ric-3 family.

It localises to the endoplasmic reticulum membrane. In terms of biological role, molecular chaperone which facilitates proper subunit assembly andsurface trafficking of alpha-7 (CHRNA7) and alpha-8 (CHRNA8) nicotinic acetylcholine receptors. May also promote functional expression of homomeric serotoninergic 5-HT3 receptors, and of heteromeric acetylcholine receptors. The protein is Protein RIC-3 (ric3) of Xenopus tropicalis (Western clawed frog).